We begin with the raw amino-acid sequence, 185 residues long: Ribosome-recycling factor (185 aa).

This sequence belongs to the RRF family.

It localises to the cytoplasm. Its function is as follows. Responsible for the release of ribosomes from messenger RNA at the termination of protein biosynthesis. May increase the efficiency of translation by recycling ribosomes from one round of translation to another. The sequence is that of Ribosome-recycling factor from Klebsiella pneumoniae (strain 342).